A 112-amino-acid polypeptide reads, in one-letter code: Nucleoid-associated protein FTW_0607 (112 aa).

The segment at 1-27 is disordered; that stretch reads MNFDMSKLMQQAQKMQEQMKKAQQERE. Residues 17–27 are compositionally biased toward basic and acidic residues; the sequence is EQMKKAQQERE.

Belongs to the YbaB/EbfC family. As to quaternary structure, homodimer.

Its subcellular location is the cytoplasm. The protein resides in the nucleoid. Its function is as follows. Binds to DNA and alters its conformation. May be involved in regulation of gene expression, nucleoid organization and DNA protection. In Francisella tularensis subsp. tularensis (strain WY96-3418), this protein is Nucleoid-associated protein FTW_0607.